A 509-amino-acid polypeptide reads, in one-letter code: Transmembrane protein 102 (509 aa).

At 1-312 the chain is on the extracellular side; sequence MASTVWGGAP…VLLATPEPPR (312 aa). Positions 167–236 are disordered; that stretch reads PPVPEESDMT…NPETPEPLET (70 aa). Positions 174 to 204 are enriched in basic and acidic residues; the sequence is DMTHQTHSKESPTDRENSVDPSHDYVPEPEP. Over residues 207 to 224 the composition is skewed to low complexity; the sequence is SLQKSSSDLSESQSSYKD. The helical transmembrane segment at 313–329 threads the bilayer; that stretch reads HLLLFDLIPVVTVTGWP. Residues 330–509 lie on the Cytoplasmic side of the membrane; that stretch reads DTARSHSWAG…GLAGVGGGTH (180 aa).

Interacts with CSF2RB; this interaction occurs preferentially in the absence of CSF2.

The protein localises to the cell membrane. Functionally, selectively involved in CSF2 deprivation-induced apoptosis via a mitochondria-dependent pathway. The polypeptide is Transmembrane protein 102 (Tmem102) (Mus musculus (Mouse)).